We begin with the raw amino-acid sequence, 573 residues long: Glutathione hydrolase 5 proenzyme (573 aa).

Residues 1–8 (MAWGHRAT) are Cytoplasmic-facing. Residues 9-29 (VCLVLLGVGLGLVIVVLAAVL) traverse the membrane as a helical; Signal-anchor for type II membrane protein segment. Residues 30–573 (SPRQASCGPG…LRKAGKASGY (544 aa)) lie on the Extracellular side of the membrane. N98 carries an N-linked (GlcNAc...) asparagine glycan. Residue R110 coordinates L-glutamate. N-linked (GlcNAc...) asparagine glycosylation is found at N185, N204, N277, N303, N347, and N378. T389 (nucleophile) is an active-site residue. L-glutamate contacts are provided by residues T407, E428, and 454 to 455 (SS).

It belongs to the gamma-glutamyltransferase family. As to quaternary structure, heterodimer composed of the light and heavy chains. The active site is located in the light chain. Post-translationally, cleaved by autocatalysis into a large and a small subunit. In terms of processing, glycosylated. Very low level of expression. Detected in spleen lymphocytes, medullary and paracortical thymic lymphocytes, lung interstitial cells, bronchial epithelium, proximal tubules in kidney, crypt cells in small intestine, neurons in brain stem and cerebral cortex and in Purkinje cells. As to expression, very low expression.

The protein resides in the membrane. The catalysed reaction is glutathione + H2O = L-cysteinylglycine + L-glutamate. The enzyme catalyses an S-substituted glutathione + H2O = an S-substituted L-cysteinylglycine + L-glutamate. It catalyses the reaction leukotriene C4 + H2O = leukotriene D4 + L-glutamate. It carries out the reaction S-[(2E,6E,10E)-geranylgeranyl]-L-glutathione + H2O = S-[(2E,6E,10E)-geranylgeranyl]-L-cysteinylglycine + L-glutamate. The catalysed reaction is an N-terminal (5-L-glutamyl)-[peptide] + an alpha-amino acid = 5-L-glutamyl amino acid + an N-terminal L-alpha-aminoacyl-[peptide]. It functions in the pathway lipid metabolism; leukotriene D4 biosynthesis. It participates in sulfur metabolism; glutathione metabolism. Inhibited by serine-borate. Its function is as follows. Cleaves the gamma-glutamyl bond of extracellular glutathione tripeptide (gamma-Glu-Cys-Gly) and certain glutathione conjugates. Hydrolyzes glutathione releasing L-Glu and Cys-Gly dipeptide which is further metabolized to maintain extracellular cysteine levels but also to provide cysteine necessary for intracellular glutathione synthesis. Among glutathione-S-conjugates metabolizes leukotriene C4 (LTC4) and S-geranylgeranyl-glutathione (GGG), but is inactive toward gamma-glutamyl leucine. Converts extracellular LTC4 to LTD4 during acute inflammatory response. Acts as a negative regulator of GGG bioactivity. GGT5 (via GGG catabolism) and ABCC1 (via extracellular transport) establish GGG gradients within lymphoid tissues to position P2RY8-positive lymphocytes at germinal centers in lymphoid follicles and restrict their chemotactic transmigration from blood vessels to bone marrow parenchyma. The transpeptidation reaction, i.e. the transfer of gamma-glutamyl moiety to an acceptor molecule to yield a new gamma-glutamyl compound requires high concentration of dipeptide acceptor and is considered nonphysiological. The sequence is that of Glutathione hydrolase 5 proenzyme (Ggt5) from Mus musculus (Mouse).